A 195-amino-acid chain; its full sequence is Small ribosomal subunit protein uS4 (195 aa).

Positions 92 to 152 constitute an S4 RNA-binding domain; it reads SRLDNIVYRL…EKHKHKANKN (61 aa).

This sequence belongs to the universal ribosomal protein uS4 family. As to quaternary structure, part of the 30S ribosomal subunit. Contacts protein S5. The interaction surface between S4 and S5 is involved in control of translational fidelity.

In terms of biological role, one of the primary rRNA binding proteins, it binds directly to 16S rRNA where it nucleates assembly of the body of the 30S subunit. Its function is as follows. With S5 and S12 plays an important role in translational accuracy. In Karelsulcia muelleri (strain GWSS) (Sulcia muelleri), this protein is Small ribosomal subunit protein uS4.